A 724-amino-acid polypeptide reads, in one-letter code: Probable protein phosphatase 2C 62 (724 aa).

The disordered stretch occupies residues 357–385 (DELISTSEATRHSVDEIAQKPIIDTSEKN). Residues 365–374 (ATRHSVDEIA) are compositionally biased toward basic and acidic residues. One can recognise a PPM-type phosphatase domain in the interval 482–719 (DSGFASLQSP…DAVTVIISFV (238 aa)). The Mn(2+) site is built by Asp514, Gly515, Asp643, and Asp710.

This sequence belongs to the PP2C family. Requires Mg(2+) as cofactor. The cofactor is Mn(2+).

It catalyses the reaction O-phospho-L-seryl-[protein] + H2O = L-seryl-[protein] + phosphate. The catalysed reaction is O-phospho-L-threonyl-[protein] + H2O = L-threonyl-[protein] + phosphate. The chain is Probable protein phosphatase 2C 62 from Arabidopsis thaliana (Mouse-ear cress).